Consider the following 236-residue polypeptide: Small ribosomal subunit protein uS2c (236 aa).

The protein belongs to the universal ribosomal protein uS2 family.

Its subcellular location is the plastid. The protein localises to the chloroplast. The chain is Small ribosomal subunit protein uS2c (rps2) from Lotus japonicus (Lotus corniculatus var. japonicus).